A 1538-amino-acid polypeptide reads, in one-letter code: Myosin-9 (1538 aa).

A Myosin N-terminal SH3-like domain is found at 16–65; that stretch reads SIGSHVWFEDPEVAWIDGEVEKINGQEVVIQATTGKKVTAKLSKIYPKDV. One can recognise a Myosin motor domain in the interval 70–740; it reads GGVDDMTKLS…QMAELDARRA (671 aa). ATP is bound by residues 164-171 and 217-225; these read GESGAGKT and NNNSSRFGK. 4 actin-binding regions span residues 503–537, 539–562, 597–621, and 621–643; these read LIEK…YQTF, THKR…AGEV, FPPL…KLQL, and LQQL…KPNN. 6 consecutive IQ domains span residues 743–772, 766–795, 791–820, 814–843, 839–868, and 862–891; these read LSSA…ATIS, LRKA…EAAA, REAA…ASLV, LHVA…TKAA, QTKA…GVVL, and LKNG…AARE. Positions 892–1064 form a coiled coil; the sequence is TGALKEAKDM…VLRQQAVSMA (173 aa). The segment covering 1017 to 1032 has biased composition (basic and acidic residues); sequence SLEDKKKKLEETEKKG. Disordered regions lie at residues 1017 to 1041 and 1098 to 1121; these read SLED…SLTR and SHSI…NEKQ. The Dilute domain maps to 1168-1481; the sequence is DRIIQTIGHA…IANMRVLMTE (314 aa).

The protein belongs to the TRAFAC class myosin-kinesin ATPase superfamily. Myosin family. Plant myosin class XI subfamily. In terms of assembly, homodimer.

Myosin heavy chain that is required for the cell cycle-regulated transport of various organelles and proteins for their segregation. Functions by binding with its tail domain to receptor proteins on organelles and exerting force with its N-terminal motor domain against actin filaments, thereby transporting its cargo along polarized actin cables. Involved in trafficking of Golgi stacks and mitochondria. In Arabidopsis thaliana (Mouse-ear cress), this protein is Myosin-9 (XI-C).